A 241-amino-acid chain; its full sequence is Pyridoxal phosphate phosphatase PHOSPHO2 (241 aa).

Asp8 acts as the Nucleophile in catalysis. The Mg(2+) site is built by Asp8 and Asp10. Asp10 acts as the Proton donor in catalysis. Residues Asp19 and Asp99 each contribute to the substrate site. Asp179 contacts Mg(2+).

The protein belongs to the HAD-like hydrolase superfamily. PHOSPHO family. It depends on Mg(2+) as a cofactor.

It catalyses the reaction pyridoxal 5'-phosphate + H2O = pyridoxal + phosphate. Phosphatase that has high activity toward pyridoxal 5'-phosphate (PLP). Also active at much lower level toward pyrophosphate, phosphoethanolamine (PEA), phosphocholine (PCho), phospho-l-tyrosine, fructose-6-phosphate, p-nitrophenyl phosphate, and h-glycerophosphate. This is Pyridoxal phosphate phosphatase PHOSPHO2 (Phospho2) from Rattus norvegicus (Rat).